The following is a 117-amino-acid chain: Protein Wnt-6 (117 aa).

The O-palmitoleoyl serine; by PORCN moiety is linked to residue Ser-1. Residues Cys-83 and Cys-98 are joined by a disulfide bond. Residue Asn-84 is glycosylated (N-linked (GlcNAc...) asparagine).

The protein belongs to the Wnt family. Palmitoleoylation is required for efficient binding to frizzled receptors. Depalmitoleoylation leads to Wnt signaling pathway inhibition.

Its subcellular location is the secreted. The protein resides in the extracellular space. It localises to the extracellular matrix. Functionally, ligand for members of the frizzled family of seven transmembrane receptors. Probable developmental protein. May be a signaling molecule which affects the development of discrete regions of tissues. Is likely to signal over only few cell diameters. This Strongylocentrotus purpuratus (Purple sea urchin) protein is Protein Wnt-6 (WNT-6).